The following is a 353-amino-acid chain: UPF0283 membrane protein YcjF (353 aa).

Residues 1 to 19 are compositionally biased toward basic and acidic residues; it reads MSEPLKPRIDFAEPLKEEP. The segment at 1 to 35 is disordered; that stretch reads MSEPLKPRIDFAEPLKEEPTSAFKAQQTFSEAESR. Helical transmembrane passes span 70–90, 100–120, and 213–233; these read MVMG…VQWT, VALG…GSVV, and ESTL…FIAW.

This sequence belongs to the UPF0283 family.

The protein localises to the cell inner membrane. The polypeptide is UPF0283 membrane protein YcjF (Salmonella enteritidis PT4 (strain P125109)).